The following is a 367-amino-acid chain: Cell-death-related nuclease 7 (367 aa).

Positions 1–18 are cleaved as a signal peptide; that stretch reads MRLYFVLIFSVIFTTGNG. N253 carries N-linked (GlcNAc...) asparagine glycosylation.

It belongs to the DNase II family.

This Caenorhabditis elegans protein is Cell-death-related nuclease 7 (crn-7).